Here is a 598-residue protein sequence, read N- to C-terminus: UvrABC system protein C (598 aa).

Residues 14 to 91 (DSPGCYLHKD…IQKNMPKYNI (78 aa)) enclose the GIY-YIG domain. Residues 196–231 (DKIIEDLRSKMLAASEEMAFERAAEYRDLISGIATM) form the UVR domain.

This sequence belongs to the UvrC family. Interacts with UvrB in an incision complex.

Its subcellular location is the cytoplasm. The UvrABC repair system catalyzes the recognition and processing of DNA lesions. UvrC both incises the 5' and 3' sides of the lesion. The N-terminal half is responsible for the 3' incision and the C-terminal half is responsible for the 5' incision. In Streptococcus pyogenes serotype M3 (strain ATCC BAA-595 / MGAS315), this protein is UvrABC system protein C.